The primary structure comprises 368 residues: tRNA/tmRNA (uracil-C(5))-methyltransferase (368 aa).

S-adenosyl-L-methionine is bound by residues Gln-186, Tyr-214, Asn-219, Glu-235, and Asp-295. Catalysis depends on Cys-320, which acts as the Nucleophile. Glu-354 (proton acceptor) is an active-site residue.

Belongs to the class I-like SAM-binding methyltransferase superfamily. RNA M5U methyltransferase family. TrmA subfamily.

It catalyses the reaction uridine(54) in tRNA + S-adenosyl-L-methionine = 5-methyluridine(54) in tRNA + S-adenosyl-L-homocysteine + H(+). The enzyme catalyses uridine(341) in tmRNA + S-adenosyl-L-methionine = 5-methyluridine(341) in tmRNA + S-adenosyl-L-homocysteine + H(+). Functionally, dual-specificity methyltransferase that catalyzes the formation of 5-methyluridine at position 54 (m5U54) in all tRNAs, and that of position 341 (m5U341) in tmRNA (transfer-mRNA). The chain is tRNA/tmRNA (uracil-C(5))-methyltransferase from Aromatoleum aromaticum (strain DSM 19018 / LMG 30748 / EbN1) (Azoarcus sp. (strain EbN1)).